The primary structure comprises 453 residues: Oocyte zinc finger protein XlCOF6 (453 aa).

C2H2-type zinc fingers lie at residues 6 to 29 (FICSKCGETFTVNSHLLTHLCGKH), 67 to 89 (FTCTECGKSFSERDNLKCHHKTH), 95 to 117 (FTCMECGKGFSVKSSLKHHYKAH), 123 to 145 (VRCTECGKEFTSKYYLNVHKRLH), 151 to 173 (FTCTQCGKCFSDKSALKYHHKTH), 179 to 201 (FACTECGKSFTEKSILQKHQRTH), 207 to 229 (FTCTECGKSYSAMSTLECHRRTH), 235 to 257 (FTCTECGKSFTEKSILRKHHKTH), 263 to 285 (FTCTECGKSCTEKSILRKHQITH), 291 to 313 (FTCTECGKCFSDKTALKYHHKTH), 319 to 341 (FACTECGKSFTDKSILRNHQRTH), 375 to 397 (FTCTECGKSFTEKSILRKHHKTH), 403 to 425 (FTCTECGKSFTHKSILQKHQRTH), and 431 to 453 (FTCTECGKCFSDKTAIKYHRITH).

Belongs to the krueppel C2H2-type zinc-finger protein family.

The protein localises to the nucleus. Functionally, may be involved in transcriptional regulation. This is Oocyte zinc finger protein XlCOF6 from Xenopus laevis (African clawed frog).